We begin with the raw amino-acid sequence, 186 residues long: LIM domain-containing protein DDB_G0271356 (186 aa).

LIM zinc-binding domains lie at 7–67 (PECY…DKFA), 68–127 (PKCQ…KIGF), and 128–186 (LCRH…KLYG).

This is LIM domain-containing protein DDB_G0271356 from Dictyostelium discoideum (Social amoeba).